The chain runs to 378 residues: tRNA (guanine(26)-N(2))-dimethyltransferase (378 aa).

In terms of domain architecture, Trm1 methyltransferase spans 4 to 374 (KEVTEGKVRI…KGYEEIIRCV (371 aa)). The S-adenosyl-L-methionine site is built by R44, R69, D87, D114, and A115. Zn(2+) is bound by residues C246, C249, C263, and C266.

This sequence belongs to the class I-like SAM-binding methyltransferase superfamily. Trm1 family.

It catalyses the reaction guanosine(26) in tRNA + 2 S-adenosyl-L-methionine = N(2)-dimethylguanosine(26) in tRNA + 2 S-adenosyl-L-homocysteine + 2 H(+). Dimethylates a single guanine residue at position 26 of a number of tRNAs using S-adenosyl-L-methionine as donor of the methyl groups. The protein is tRNA (guanine(26)-N(2))-dimethyltransferase of Saccharolobus islandicus (strain M.16.27) (Sulfolobus islandicus).